Here is a 173-residue protein sequence, read N- to C-terminus: Membrane protein PM19L (173 aa).

A run of 4 helical transmembrane segments spans residues 9–29, 43–63, 83–103, and 124–144; these read IAPL…FASW, GVAG…AGVV, LAAG…AFGL, and FVII…GGLF.

As to expression, expressed in roots, leaf blades, leaf sheaths, stems, spikelets and embryos.

It is found in the membrane. Its function is as follows. May be involved in abiotic stress response through abscisic acid-dependent signaling. This chain is Membrane protein PM19L, found in Oryza sativa subsp. japonica (Rice).